Here is a 210-residue protein sequence, read N- to C-terminus: Acetoin utilization protein AcuA (210 aa).

The N-acetyltransferase domain maps to 19 to 189; the sequence is VLIEGPISPE…ANCLMARIGK (171 aa).

Belongs to the acetyltransferase family. In terms of assembly, monomer.

The protein operates within ketone degradation; acetoin degradation. Its function is as follows. Part of the acuABC operon, which is possibly involved in the breakdown of acetoin and butanediol. Acts as an acetyltransferase inactivating acetyl-CoA synthetase AcsA via acetylation at a Lys residue. The chain is Acetoin utilization protein AcuA from Bacillus licheniformis (strain ATCC 14580 / DSM 13 / JCM 2505 / CCUG 7422 / NBRC 12200 / NCIMB 9375 / NCTC 10341 / NRRL NRS-1264 / Gibson 46).